The primary structure comprises 237 residues: Alpha-S1-casein (237 aa).

The signal sequence occupies residues 1–15 (MKLLIFSCLVTLALA). A disordered region spans residues 39–60 (EDPIPVSEASSSEESVHQLNRD). Phosphoserine is present on residues Ser79, Ser80, and Ser81.

This sequence belongs to the alpha-casein family. Mammary gland specific. Secreted in milk.

The protein resides in the secreted. In terms of biological role, important role in the capacity of milk to transport calcium phosphate. The polypeptide is Alpha-S1-casein (CSN1S1) (Notamacropus eugenii (Tammar wallaby)).